Consider the following 744-residue polypeptide: Catalase-peroxidase (744 aa).

The segment at 1–21 is disordered; it reads MANESKCPFHQTAGGGTSNRD. The tryptophyl-tyrosyl-methioninium (Trp-Tyr) (with M-267) cross-link spans 91 to 241; sequence WHSAGTYRIG…LAAVQMGLIY (151 aa). Residue histidine 92 is the Proton acceptor of the active site. The tryptophyl-tyrosyl-methioninium (Tyr-Met) (with W-91) cross-link spans 241-267; the sequence is YVNPEGPEGNPDPVASGKDIRDTFGRM. Histidine 282 contributes to the heme b binding site. The disordered stretch occupies residues 361-387; that stretch reads GAHQWRPKDGKGANTVPDAHDTTKRHA.

The protein belongs to the peroxidase family. Peroxidase/catalase subfamily. In terms of assembly, homodimer or homotetramer. Heme b serves as cofactor. Post-translationally, formation of the three residue Trp-Tyr-Met cross-link is important for the catalase, but not the peroxidase activity of the enzyme.

It catalyses the reaction H2O2 + AH2 = A + 2 H2O. It carries out the reaction 2 H2O2 = O2 + 2 H2O. Bifunctional enzyme with both catalase and broad-spectrum peroxidase activity. The polypeptide is Catalase-peroxidase (Pseudomonas entomophila (strain L48)).